We begin with the raw amino-acid sequence, 367 residues long: Dual specificity protein phosphatase 1 (367 aa).

Positions 20–137 (RAAQCLLLDC…FSASCPELCS (118 aa)) constitute a Rhodanese domain. The 142-residue stretch at 173–314 (GPVEILPFLY…LLQFESQVLA (142 aa)) folds into the Tyrosine-protein phosphatase domain. C258 (phosphocysteine intermediate) is an active-site residue. S359 and S364 each carry phosphoserine; by MAPK1 and MAPK3.

This sequence belongs to the protein-tyrosine phosphatase family. Non-receptor class dual specificity subfamily. Post-translationally, phosphorylation at Ser-359 and Ser-364 by MAPK1/ERK2 and MAPK3/ERK1 reduces its rate of degradation. In terms of processing, 'Lys-48'-linked polyubiquitinated by NEURL3, leading to proteasomal degradation. As to expression, expressed at high levels in the lung, liver placenta and pancreas. Moderate levels seen in the heart and skeletal muscle. Lower levels found in the brain and kidney.

The protein localises to the nucleus. It catalyses the reaction O-phospho-L-tyrosyl-[protein] + H2O = L-tyrosyl-[protein] + phosphate. The catalysed reaction is O-phospho-L-seryl-[protein] + H2O = L-seryl-[protein] + phosphate. The enzyme catalyses O-phospho-L-threonyl-[protein] + H2O = L-threonyl-[protein] + phosphate. Its function is as follows. Dual specificity phosphatase that dephosphorylates MAP kinase MAPK1/ERK2 on both 'Thr-183' and 'Tyr-185', regulating its activity during the meiotic cell cycle. The protein is Dual specificity protein phosphatase 1 of Homo sapiens (Human).